The primary structure comprises 138 residues: Holo-[acyl-carrier-protein] synthase (138 aa).

Mg(2+) contacts are provided by Asp-8 and Glu-56.

The protein belongs to the P-Pant transferase superfamily. AcpS family. Mg(2+) is required as a cofactor.

It is found in the cytoplasm. It carries out the reaction apo-[ACP] + CoA = holo-[ACP] + adenosine 3',5'-bisphosphate + H(+). In terms of biological role, transfers the 4'-phosphopantetheine moiety from coenzyme A to a Ser of acyl-carrier-protein. This is Holo-[acyl-carrier-protein] synthase from Clostridium novyi (strain NT).